The chain runs to 337 residues: Glyceraldehyde-3-phosphate dehydrogenase (337 aa).

Residues 12-13 (RI), Asp34, and Arg79 contribute to the NAD(+) site. Residues 150–152 (SCT), Thr181, 210–211 (TG), and Arg233 contribute to the D-glyceraldehyde 3-phosphate site. Cys151 (nucleophile) is an active-site residue. Residue Asn315 coordinates NAD(+).

It belongs to the glyceraldehyde-3-phosphate dehydrogenase family. Homotetramer.

The protein resides in the cytoplasm. The enzyme catalyses D-glyceraldehyde 3-phosphate + phosphate + NAD(+) = (2R)-3-phospho-glyceroyl phosphate + NADH + H(+). It functions in the pathway carbohydrate degradation; glycolysis; pyruvate from D-glyceraldehyde 3-phosphate: step 1/5. The chain is Glyceraldehyde-3-phosphate dehydrogenase (GPD-1) from Claviceps purpurea (strain 20.1) (Ergot fungus).